The following is a 340-amino-acid chain: Dihydroorotate dehydrogenase (quinone) (340 aa).

Residues 61–65 and T85 each bind FMN; that span reads AGLDK. K65 lines the substrate pocket. 110–114 is a binding site for substrate; the sequence is NRMGF. The FMN site is built by N138 and N171. A substrate-binding site is contributed by N171. S174 (nucleophile) is an active-site residue. N176 is a binding site for substrate. K216 and T244 together coordinate FMN. 245–246 provides a ligand contact to substrate; the sequence is NT. Residues G267, G296, and 317–318 each bind FMN; that span reads YS.

Belongs to the dihydroorotate dehydrogenase family. Type 2 subfamily. As to quaternary structure, monomer. The cofactor is FMN.

The protein resides in the cell membrane. The catalysed reaction is (S)-dihydroorotate + a quinone = orotate + a quinol. The protein operates within pyrimidine metabolism; UMP biosynthesis via de novo pathway; orotate from (S)-dihydroorotate (quinone route): step 1/1. Functionally, catalyzes the conversion of dihydroorotate to orotate with quinone as electron acceptor. The polypeptide is Dihydroorotate dehydrogenase (quinone) (Pseudomonas putida (strain ATCC 47054 / DSM 6125 / CFBP 8728 / NCIMB 11950 / KT2440)).